Here is a 224-residue protein sequence, read N- to C-terminus: Putative O-methyltransferase MMAR_4217 (224 aa).

Polar residues predominate over residues 1–11; sequence MHGTDSSSDTP. The segment at 1–20 is disordered; it reads MHGTDSSSDTPGQPAPSRAE. Residues V51, E73, 75–76, S81, D99, and I100 each bind S-adenosyl-L-methionine; that span reads GT. D147 is a binding site for substrate. D149 is a binding site for S-adenosyl-L-methionine.

Belongs to the class I-like SAM-binding methyltransferase superfamily. Cation-dependent O-methyltransferase family.

In Mycobacterium marinum (strain ATCC BAA-535 / M), this protein is Putative O-methyltransferase MMAR_4217.